The following is a 207-amino-acid chain: Urease accessory protein UreG (207 aa).

12–19 serves as a coordination point for GTP; that stretch reads GPVGAGKT.

It belongs to the SIMIBI class G3E GTPase family. UreG subfamily. As to quaternary structure, homodimer. UreD, UreF and UreG form a complex that acts as a GTP-hydrolysis-dependent molecular chaperone, activating the urease apoprotein by helping to assemble the nickel containing metallocenter of UreC. The UreE protein probably delivers the nickel.

It localises to the cytoplasm. In terms of biological role, facilitates the functional incorporation of the urease nickel metallocenter. This process requires GTP hydrolysis, probably effectuated by UreG. This chain is Urease accessory protein UreG, found in Cereibacter sphaeroides (strain ATCC 17023 / DSM 158 / JCM 6121 / CCUG 31486 / LMG 2827 / NBRC 12203 / NCIMB 8253 / ATH 2.4.1.) (Rhodobacter sphaeroides).